The chain runs to 440 residues: MFLAQEIIRKKRDGQPLSEEEIRFFINGIRDNVVSEGQIAALAMTIYFHDMSMPERVALTMAMRDSGTVLNWKSLNLNGPLVDKHSTGGVGDVTSLMLGPMVAACGGYVPMISGRGLGHTGGTLDKLEAIPGFDIFPDDNAFRKIIQNVGVAIIGQTSSLAPADKRFYATRDITATVDSIPLITASILAKKLAEGLDALVMDVKVGSGAFMPTYSLSADLAQAIVGVANGAGCKTTALLTDMNQVLASSAGNGVEVREAVRFLTGEYRNPRLLEVTMALCVEMLLSGGLAHDEADARAKLQAVLDNGKAAEVFGRMVAAQKGPADFVERYDSYLPVATLSKPVFAEQTGIITAMDTRALGMAVVALGGGRRRATDPIDYSVGLTEMARLGTRVDGQQPLAVIHANNEDDWQQEAEVVRAAITLGNNTPEETPVIYRRITE.

It belongs to the thymidine/pyrimidine-nucleoside phosphorylase family. In terms of assembly, homodimer.

The catalysed reaction is thymidine + phosphate = 2-deoxy-alpha-D-ribose 1-phosphate + thymine. It participates in pyrimidine metabolism; dTMP biosynthesis via salvage pathway; dTMP from thymine: step 1/2. The enzymes which catalyze the reversible phosphorolysis of pyrimidine nucleosides are involved in the degradation of these compounds and in their utilization as carbon and energy sources, or in the rescue of pyrimidine bases for nucleotide synthesis. The protein is Thymidine phosphorylase of Yersinia pestis.